The primary structure comprises 352 residues: UDP-N-acetylglucosamine--N-acetylmuramyl-(pentapeptide) pyrophosphoryl-undecaprenol N-acetylglucosamine transferase (352 aa).

Residues serine 195 and glutamine 287 each contribute to the UDP-N-acetyl-alpha-D-glucosamine site.

Belongs to the glycosyltransferase 28 family. MurG subfamily.

The protein resides in the cell membrane. The enzyme catalyses Mur2Ac(oyl-L-Ala-gamma-D-Glu-L-Lys-D-Ala-D-Ala)-di-trans,octa-cis-undecaprenyl diphosphate + UDP-N-acetyl-alpha-D-glucosamine = beta-D-GlcNAc-(1-&gt;4)-Mur2Ac(oyl-L-Ala-gamma-D-Glu-L-Lys-D-Ala-D-Ala)-di-trans,octa-cis-undecaprenyl diphosphate + UDP + H(+). Its pathway is cell wall biogenesis; peptidoglycan biosynthesis. Cell wall formation. Catalyzes the transfer of a GlcNAc subunit on undecaprenyl-pyrophosphoryl-MurNAc-pentapeptide (lipid intermediate I) to form undecaprenyl-pyrophosphoryl-MurNAc-(pentapeptide)GlcNAc (lipid intermediate II). The sequence is that of UDP-N-acetylglucosamine--N-acetylmuramyl-(pentapeptide) pyrophosphoryl-undecaprenol N-acetylglucosamine transferase from Streptococcus pneumoniae (strain 70585).